Here is a 140-residue protein sequence, read N- to C-terminus: Pro-Viral epidermal growth factor (140 aa).

Residues 1–18 form the signal peptide; sequence MSMKYLMLLFAAMIIRSF. Topologically, residues 19–100 are extracellular; that stretch reads ADSGNAIETT…SENPNTTTSY (82 aa). N-linked (GlcNAc...) asparagine; by host glycosylation occurs at asparagine 34. In terms of domain architecture, EGF-like spans 41–81; that stretch reads AIRLCGPEGDGYCLHGDCIHARDIDGMYCRCSHGYTGIRCQ. Disulfide bonds link cysteine 45–cysteine 58, cysteine 53–cysteine 69, and cysteine 71–cysteine 80. Residue asparagine 95 is glycosylated (N-linked (GlcNAc...) asparagine; by host). The chain crosses the membrane as a helical span at residues 101–121; sequence IPSPGIMLVLVGIIIITCCLL. Over 122 to 140 the chain is Cytoplasmic; sequence SVYRFTRRTKLPIQDMVVP.

Belongs to the orthopoxvirus OPG019 family. In terms of assembly, viral epidermal growth factor interacts with host EGFR and promotes EGFR dimerization. In terms of processing, cleaved at the cell surface by host ADAM10, thereby releasing the secreted form of VGF.

The protein resides in the host membrane. Its subcellular location is the secreted. Stimulates cellular proliferation (hyperplasia)and mobility around infected cells to promote rapid and efficient spread of infection. This effect is beneficial for virus replication in vivo, because poxviruses replicate possibly better in proliferating cells than in quiescent cells. Acts by binding host EGFR, inducing its dimerization, autophosphorylation and leading to activation of several cellular pathways regulating cell proliferation or cell survival. The activation by host EGFR of mitogen activated protein kinases (MAPK) and extracellular-signal regulated kinases (ERK) are essential for the positive effect of vaccinia growth factor on poxvirus virulence in vivo. The chain is Pro-Viral epidermal growth factor (OPG019) from Bos taurus (Bovine).